The chain runs to 429 residues: Adenylosuccinate synthetase (429 aa).

Residues 12–18 (GDEGKGK) and 40–42 (GHT) contribute to the GTP site. The active-site Proton acceptor is the aspartate 13. Mg(2+)-binding residues include aspartate 13 and glycine 40. IMP is bound by residues 13–16 (DEGK), 38–41 (NAGH), threonine 128, arginine 142, glutamine 223, threonine 238, and arginine 302. The active-site Proton donor is histidine 41. A substrate-binding site is contributed by 298–304 (TTTGRPR). Residues arginine 304, 330 to 332 (CID), and 412 to 414 (SVG) each bind GTP.

Belongs to the adenylosuccinate synthetase family. Homodimer. Requires Mg(2+) as cofactor.

It localises to the cytoplasm. The catalysed reaction is IMP + L-aspartate + GTP = N(6)-(1,2-dicarboxyethyl)-AMP + GDP + phosphate + 2 H(+). It functions in the pathway purine metabolism; AMP biosynthesis via de novo pathway; AMP from IMP: step 1/2. In terms of biological role, plays an important role in the de novo pathway of purine nucleotide biosynthesis. Catalyzes the first committed step in the biosynthesis of AMP from IMP. The chain is Adenylosuccinate synthetase from Streptococcus mutans serotype c (strain ATCC 700610 / UA159).